We begin with the raw amino-acid sequence, 230 residues long: tRNA (guanine-N(7)-)-methyltransferase (230 aa).

Residues Glu-61, Glu-86, Asp-113, and Asp-135 each contribute to the S-adenosyl-L-methionine site. Asp-135 is an active-site residue. Residues Lys-139, Asp-171, and 209 to 212 (TRYE) contribute to the substrate site.

The protein belongs to the class I-like SAM-binding methyltransferase superfamily. TrmB family.

The enzyme catalyses guanosine(46) in tRNA + S-adenosyl-L-methionine = N(7)-methylguanosine(46) in tRNA + S-adenosyl-L-homocysteine. It participates in tRNA modification; N(7)-methylguanine-tRNA biosynthesis. In terms of biological role, catalyzes the formation of N(7)-methylguanine at position 46 (m7G46) in tRNA. This is tRNA (guanine-N(7)-)-methyltransferase from Azorhizobium caulinodans (strain ATCC 43989 / DSM 5975 / JCM 20966 / LMG 6465 / NBRC 14845 / NCIMB 13405 / ORS 571).